The sequence spans 324 residues: NADH-ubiquinone oxidoreductase chain 1 (324 aa).

Helical transmembrane passes span 9 to 29, 75 to 95, 106 to 126, 146 to 166, 177 to 197, 237 to 257, 259 to 279, and 299 to 319; these read VLNP…LTLL, FLFL…WAPM, LGVL…LGSG, ISYE…TGGF, SIWL…STLA, ILLM…IPAL, ELTA…FLWV, and FLPM…ALAG.

Belongs to the complex I subunit 1 family.

It localises to the mitochondrion inner membrane. It carries out the reaction a ubiquinone + NADH + 5 H(+)(in) = a ubiquinol + NAD(+) + 4 H(+)(out). Its function is as follows. Core subunit of the mitochondrial membrane respiratory chain NADH dehydrogenase (Complex I) that is believed to belong to the minimal assembly required for catalysis. Complex I functions in the transfer of electrons from NADH to the respiratory chain. The immediate electron acceptor for the enzyme is believed to be ubiquinone. The polypeptide is NADH-ubiquinone oxidoreductase chain 1 (MT-ND1) (Thymallus arcticus (Arctic grayling)).